The sequence spans 545 residues: MTHFIFVTGGVVSSLGKGISAASVAALLEARGLKVTMVKMDPYINVDPGTMSPFQHGEVFVTEDGAETDLDLGYYERFLRRAKMTKLNNFTSGRVYQDVLNKERRGDYLGGTVQVIPHITDNIKERVLRAGEGYDVAIVEIGGTVGDIESLPFMESVRQLMVELGHKRTMLMHLTLLPYIKSAAELKTKPTQHSVKELLSIGIQPDILICRTEYDVDADTKRKIALFTNVEARAVVVCKDAKTIYQIPRGFYEQNVDDLICERFGFTDLPEADLTDWDNVVEALLNPEYTVRVAMVGKYVELPDAYKSVNEALLHAGIKNRVKVQIDYVNAEELESQDVSILKTADAILVPGGFGERGTEGKMKAIQYARENGIPFLGICLGMQLAVIEYARHVAGMPEASSTEFNRSTKYPLIGLITEWLDERGELQQRSLESDLGGTMRLGAQKSELVEGTKTREVYGKAEITERHRHRYEMNNRFIEAIEQAGMKISGYSSAQHLVETVEIPEHPWFIAVQFHPEFTSSPRDGHPLFASFIDAAKTQHQKSK.

The interval 1–266 (MTHFIFVTGG…DDLICERFGF (266 aa)) is amidoligase domain. Residue Ser-13 coordinates CTP. Ser-13 contributes to the UTP binding site. ATP-binding positions include 14–19 (SLGKGI) and Asp-71. The Mg(2+) site is built by Asp-71 and Glu-140. CTP-binding positions include 147–149 (DIE), 187–192 (KTKPTQ), and Lys-223. UTP is bound by residues 187 to 192 (KTKPTQ) and Lys-223. 239-241 (KDA) is a binding site for ATP. One can recognise a Glutamine amidotransferase type-1 domain in the interval 292-543 (RVAMVGKYVE…IDAAKTQHQK (252 aa)). Gly-353 provides a ligand contact to L-glutamine. Cys-380 acts as the Nucleophile; for glutamine hydrolysis in catalysis. L-glutamine-binding positions include 381 to 384 (LGMQ), Glu-404, and Arg-471. Catalysis depends on residues His-516 and Glu-518.

This sequence belongs to the CTP synthase family. In terms of assembly, homotetramer.

It carries out the reaction UTP + L-glutamine + ATP + H2O = CTP + L-glutamate + ADP + phosphate + 2 H(+). It catalyses the reaction L-glutamine + H2O = L-glutamate + NH4(+). The enzyme catalyses UTP + NH4(+) + ATP = CTP + ADP + phosphate + 2 H(+). The protein operates within pyrimidine metabolism; CTP biosynthesis via de novo pathway; CTP from UDP: step 2/2. With respect to regulation, allosterically activated by GTP, when glutamine is the substrate; GTP has no effect on the reaction when ammonia is the substrate. The allosteric effector GTP functions by stabilizing the protein conformation that binds the tetrahedral intermediate(s) formed during glutamine hydrolysis. Inhibited by the product CTP, via allosteric rather than competitive inhibition. In terms of biological role, catalyzes the ATP-dependent amination of UTP to CTP with either L-glutamine or ammonia as the source of nitrogen. Regulates intracellular CTP levels through interactions with the four ribonucleotide triphosphates. The chain is CTP synthase from Acinetobacter baumannii (strain AB307-0294).